Here is a 619-residue protein sequence, read N- to C-terminus: Translation initiation factor IF-2 (619 aa).

Composition is skewed to low complexity over residues 1 to 18 (MTLN…TTPK) and 98 to 111 (PPQL…LTKT). Disordered stretches follow at residues 1 to 24 (MTLN…KETD) and 90 to 113 (SEPQ…KTKP). A tr-type G domain is found at 121–289 (KKSPIVTIMG…ILLVSEIQNL (169 aa)). The segment at 130-137 (GHVDHGKT) is G1. A GTP-binding site is contributed by 130–137 (GHVDHGKT). A G2 region spans residues 155–159 (GITQH). Positions 176 to 179 (DTPG) are G3. Residues 176 to 180 (DTPGH) and 230 to 233 (NKID) contribute to the GTP site. Residues 230–233 (NKID) form a G4 region. The tract at residues 266 to 268 (SAL) is G5.

It belongs to the TRAFAC class translation factor GTPase superfamily. Classic translation factor GTPase family. IF-2 subfamily.

It localises to the cytoplasm. Its function is as follows. One of the essential components for the initiation of protein synthesis. Protects formylmethionyl-tRNA from spontaneous hydrolysis and promotes its binding to the 30S ribosomal subunits. Also involved in the hydrolysis of GTP during the formation of the 70S ribosomal complex. The sequence is that of Translation initiation factor IF-2 from Onion yellows phytoplasma (strain OY-M).